The following is a 148-amino-acid chain: UPF0756 membrane protein NMA2160 (148 aa).

4 helical membrane passes run 13–35 (LILLGVVSNNNSITISATILLLM), 50–70 (HGLNLGIILLTIGVLSPLVSG), 80–100 (FLNFKMISAVFIGIFVAWLAG), and 121–141 (VIGVAFMGGIPVGPLIAAGIL).

It belongs to the UPF0756 family.

It is found in the cell membrane. The protein is UPF0756 membrane protein NMA2160 of Neisseria meningitidis serogroup A / serotype 4A (strain DSM 15465 / Z2491).